The sequence spans 315 residues: Methylglutaconyl-CoA hydratase, mitochondrial (315 aa).

The transit peptide at 1–43 (MAAAAAPGALGALSAGRVRLVAACCARLGSAAWARGTAPRRGY) directs the protein to the mitochondrion. Lys76 bears the N6-acetyllysine; alternate mark. Lys76 is subject to N6-succinyllysine; alternate. Residues 81–95 (KNLLKMLSKAVDALK) form an RNA-binding region. N6-succinyllysine is present on Lys85. N6-acetyllysine; alternate is present on residues Lys89 and Lys120. 2 positions are modified to N6-succinyllysine; alternate: Lys89 and Lys120. N6-succinyllysine occurs at positions 124 and 136. 2 positions are modified to N6-acetyllysine; alternate: Lys180 and Lys187. An N6-succinyllysine; alternate mark is found at Lys180 and Lys187. Position 305 is an N6-succinyllysine (Lys305).

It belongs to the enoyl-CoA hydratase/isomerase family. Homohexamer.

The protein resides in the mitochondrion. The enzyme catalyses (3S)-3-hydroxy-3-methylglutaryl-CoA = 3-methyl-(2E)-glutaconyl-CoA + H2O. It carries out the reaction (3S)-citramalyl-CoA = itaconyl-CoA + H2O. It catalyses the reaction 3-hydroxyisovaleryl-CoA = 3-methylbut-2-enoyl-CoA + H2O. The catalysed reaction is (S)-3-hydroxyglutaryl-CoA = (2E)-glutaconyl-CoA + H2O. Its pathway is amino-acid degradation; L-leucine degradation; (S)-3-hydroxy-3-methylglutaryl-CoA from 3-isovaleryl-CoA: step 3/3. Functionally, catalyzes the fifth step in the leucine degradation pathway, the reversible hydration of 3-methylglutaconyl-CoA (3-MG-CoA) to 3-hydroxy-3-methylglutaryl-CoA (HMG-CoA). Can catalyze the reverse reaction but at a much lower rate in vitro. HMG-CoA is then quickly degraded by another enzyme (such as HMG-CoA lyase) to give acetyl-CoA and acetoacetate. Uses other substrates such as (2E)-glutaconyl-CoA efficiently in vitro, and to a lesser extent 3-methylcrotonyl-CoA (3-methyl-(2E)-butenoyl-CoA), crotonyl-CoA ((2E)-butenoyl-CoA) and 3-hydroxybutanoyl-CoA (the missing carboxylate reduces affinity to the active site). Originally it was identified as an RNA-binding protein as it binds to AU-rich elements (AREs) in vitro. AREs direct rapid RNA degradation and mRNA deadenylation. Might have itaconyl-CoA hydratase activity, converting itaconyl-CoA into citramalyl-CoA in the C5-dicarboxylate catabolism pathway. The C5-dicarboxylate catabolism pathway is required to detoxify itaconate, an antimicrobial metabolite and immunomodulator produced by macrophages during certain infections, that can act as a vitamin B12-poisoning metabolite. This chain is Methylglutaconyl-CoA hydratase, mitochondrial, found in Rattus norvegicus (Rat).